Here is a 269-residue protein sequence, read N- to C-terminus: Octanoyltransferase LipM (269 aa).

Positions 31–239 (NHGAPVLRFY…GFSEGFEVNF (209 aa)) constitute a BPL/LPL catalytic domain. Cys141 acts as the Acyl-thioester intermediate in catalysis.

This sequence belongs to the octanoyltransferase LipM family. In terms of assembly, monomer.

It carries out the reaction octanoyl-[ACP] + L-lysyl-[protein] = N(6)-octanoyl-L-lysyl-[protein] + holo-[ACP] + H(+). The protein operates within protein modification; protein lipoylation via endogenous pathway; protein N(6)-(lipoyl)lysine from octanoyl-[acyl-carrier-protein]. In terms of biological role, catalyzes the transfer of endogenously produced octanoic acid from octanoyl-acyl-carrier-protein onto the lipoyl domain of GcvH, an intermediate carrier during protein lipoylation. The polypeptide is Octanoyltransferase LipM (Carboxydothermus hydrogenoformans (strain ATCC BAA-161 / DSM 6008 / Z-2901)).